The chain runs to 189 residues: Elongation factor P (189 aa).

This sequence belongs to the elongation factor P family.

The protein localises to the cytoplasm. It functions in the pathway protein biosynthesis; polypeptide chain elongation. Functionally, involved in peptide bond synthesis. Stimulates efficient translation and peptide-bond synthesis on native or reconstituted 70S ribosomes in vitro. Probably functions indirectly by altering the affinity of the ribosome for aminoacyl-tRNA, thus increasing their reactivity as acceptors for peptidyl transferase. The sequence is that of Elongation factor P from Phytoplasma australiense.